The primary structure comprises 110 residues: Body wall hemoglobin (110 aa).

Residues 2–110 form the Globin domain; the sequence is VNWAAVVDAF…GAVDAIISHF (109 aa). Position 70 (His-70) interacts with heme.

The protein belongs to the globin family. As to quaternary structure, homotetramer.

This chain is Body wall hemoglobin, found in Cerebratulus lacteus (Milky ribbon worm).